The primary structure comprises 419 residues: UDP-N-acetylglucosamine 1-carboxyvinyltransferase (419 aa).

Lys-22 to Asn-23 contributes to the phosphoenolpyruvate binding site. Residue Arg-91 coordinates UDP-N-acetyl-alpha-D-glucosamine. Residue Cys-115 is the Proton donor of the active site. Residue Cys-115 is modified to 2-(S-cysteinyl)pyruvic acid O-phosphothioketal. Residues Arg-120–Leu-124, Lys-160–Val-163, Asp-305, and Ile-327 contribute to the UDP-N-acetyl-alpha-D-glucosamine site.

It belongs to the EPSP synthase family. MurA subfamily.

It localises to the cytoplasm. The catalysed reaction is phosphoenolpyruvate + UDP-N-acetyl-alpha-D-glucosamine = UDP-N-acetyl-3-O-(1-carboxyvinyl)-alpha-D-glucosamine + phosphate. Its pathway is cell wall biogenesis; peptidoglycan biosynthesis. In terms of biological role, cell wall formation. Adds enolpyruvyl to UDP-N-acetylglucosamine. The sequence is that of UDP-N-acetylglucosamine 1-carboxyvinyltransferase from Klebsiella pneumoniae subsp. pneumoniae (strain ATCC 700721 / MGH 78578).